Here is a 205-residue protein sequence, read N- to C-terminus: Peptidyl-tRNA hydrolase (205 aa).

Position 14 (Y14) interacts with tRNA. H19 acts as the Proton acceptor in catalysis. TRNA-binding residues include Y64, N66, and N112.

It belongs to the PTH family. Monomer.

It is found in the cytoplasm. It carries out the reaction an N-acyl-L-alpha-aminoacyl-tRNA + H2O = an N-acyl-L-amino acid + a tRNA + H(+). Its function is as follows. Hydrolyzes ribosome-free peptidyl-tRNAs (with 1 or more amino acids incorporated), which drop off the ribosome during protein synthesis, or as a result of ribosome stalling. In terms of biological role, catalyzes the release of premature peptidyl moieties from peptidyl-tRNA molecules trapped in stalled 50S ribosomal subunits, and thus maintains levels of free tRNAs and 50S ribosomes. The sequence is that of Peptidyl-tRNA hydrolase from Parvibaculum lavamentivorans (strain DS-1 / DSM 13023 / NCIMB 13966).